The following is a 222-amino-acid chain: Thiopurine S-methyltransferase (222 aa).

S-adenosyl-L-methionine is bound by residues Trp-10, Leu-45, Glu-66, and Arg-124.

The protein belongs to the class I-like SAM-binding methyltransferase superfamily. TPMT family.

Its subcellular location is the cytoplasm. It catalyses the reaction S-adenosyl-L-methionine + a thiopurine = S-adenosyl-L-homocysteine + a thiopurine S-methylether.. The polypeptide is Thiopurine S-methyltransferase (Methylococcus capsulatus (strain ATCC 33009 / NCIMB 11132 / Bath)).